Reading from the N-terminus, the 594-residue chain is MNKLYIGNLSENVSPTDLESLFKESKIPFTGQFLVKSGYAFVDCPDETWAMKAIDTLSGKVELHGKVIEVEHSVPKRQRSRKLQIRNIPPHLQWEVLDSLLAQYGTVENCEQVNTESETAVVNVTYANKEHARQGLEKLNGYQLENYSLKVTYIPDEMATPQAPSQQLQQQPQQQHPQGRRGFGQRGPARQGSPGAAARPKPQTEVPLRMLVPTQFVGAIIGKEGATIRNITKQTQSKIDIHRKENAGAAEKPITIHSTPEGCSAACKIIMEIMQKEAQDTKFTEEIPLKILAHNNFVGRLIGKEGRNLKKIEQDTDTKITISPLQDLTLYNPERTITVKGSIEPCAKAEEEIMKKIRESYENDIAAMNLQAHLIPGLNLNALGLFPSSSSGMPPPSVGVPSPTSSTSYPPFGQQPESETVHLFIPALAVGAIIGKQGQHIKQLSRFAGASIKIAPAEGPDAKLRMVIITGPPEAQFKAQGRIYGKLKEENFFGPKEEVKLETHIKVPSYAAGRVIGKGGKTVNELQNLTSAEVVVPRDQTPDENDEVVVKITGHFYASQLAQRKIQEILAQVRRQQQQQQKTVQSGQPQPRRK.

2 consecutive RRM domains span residues Asn2 to Pro75 and Arg81 to Asp156. Residues Pro161–Pro177 are compositionally biased toward low complexity. Positions Pro161–Val206 are disordered. KH domains are found at residues Glu205–Ile270 and Glu286–Ile353. The interval Gly392 to Gln415 is disordered. Residues Gly399–Pro411 show a composition bias toward low complexity. KH domains follow at residues Ser418–Ile483 and Lys500–Ile566.

The protein belongs to the RRM IMP/VICKZ family. Homodimer and multimer. Associates with microtubules. Interaction with a translocation machinery protein TRAPA of the endoplasmic reticulum. Component of a mRNP complex, at least composed of DAZAP1, IGF2BP3, STAU and VgRBP60. The mRNP complex with DAZAP1, IGF2BP3, STAU and VgRBP60 is only found in the cytoplasm. Interacts with a hnRNP 1 related RNA transport protein VgRBP60 both in the nucleus (in a RNA-independent manner) and the cytoplasm (in a RNA-dependent manner). Found in a B3 activator complex.

It localises to the nucleus. The protein resides in the cytoplasm. It is found in the endoplasmic reticulum. In terms of biological role, RNA-binding protein that acts as a regulator of mRNA transport and localization. Binds to the RNA sequence motif 5'-UUCAC-3'. Preferentially binds to N6-methyladenosine (m6A)-containing mRNAs and increases their stability. Mediates the specific association of Vg1 RNA to microtubules. Binds specifically to the vegetal localization elements (VLE or VgLE) in the 3'-UTR of Vg1 and VegT mRNAs. Binds to the Vg1 and VegT mRNAs in both the nucleus and the cytoplasm. May regulate mRNA translation. Acts as a transcription regulator. Binds to the 5'-[TA]GGTTACT-3' motif within element 3 of the TFIIIA gene promoter. The protein is Insulin-like growth factor 2 mRNA-binding protein 3-A (igf2bp3-a) of Xenopus laevis (African clawed frog).